The chain runs to 101 residues: Nucleoid-associated protein Acid345_1974 (101 aa).

The protein belongs to the YbaB/EbfC family. In terms of assembly, homodimer.

The protein localises to the cytoplasm. Its subcellular location is the nucleoid. Its function is as follows. Binds to DNA and alters its conformation. May be involved in regulation of gene expression, nucleoid organization and DNA protection. The chain is Nucleoid-associated protein Acid345_1974 from Koribacter versatilis (strain Ellin345).